Reading from the N-terminus, the 186-residue chain is TATA box-binding protein-like 1 (186 aa).

It belongs to the TBP family. Expressed ubiquitously with highest expression in the ovary and testis.

Its subcellular location is the cytoplasm. It localises to the nucleus. Its function is as follows. Part of a specialized transcription system that mediates the transcription of most ribosomal proteins through the 5'-TCT-3' motif which is a core promoter element at these genes. Seems to also mediate the transcription of NF1. Does not bind the TATA box. Members of the TBP family are differentially required to regulate transcription and development during early embryogenesis. Particularly regulates genes that have a role in catabolism. The sequence is that of TATA box-binding protein-like 1 (tbpl1) from Xenopus laevis (African clawed frog).